The sequence spans 396 residues: Purine ribonucleoside efflux pump NepI (396 aa).

Residues 1-21 (MSEFIAENRGADAITRPNWSA) are Cytoplasmic-facing. A helical transmembrane segment spans residues 22–42 (VFSVAFCVACLIIVEFLPVSL). At 43–54 (LTPMAQDLGISE) the chain is on the periplasmic side. A helical membrane pass occupies residues 55-75 (GVAGQSVTVTAFVAMFASLFI). At 76 to 85 (TQTIQATDRR) the chain is on the cytoplasmic side. Residues 86 to 106 (YVVILFAVLLTLSCLLVSFAN) form a helical membrane-spanning segment. Residue serine 107 is a topological domain, periplasmic. A helical transmembrane segment spans residues 108 to 128 (FSLLLIGRACLGLALGGFWAI). Topologically, residues 129–147 (SASLTMRLVPPRTVPKALS) are cytoplasmic. The chain crosses the membrane as a helical span at residues 148 to 168 (VIFGAVSIALVIAAPLGGFLG). Topologically, residues 169-175 (ELIGWRN) are periplasmic. The helical transmembrane segment at 176 to 196 (VFNAAAAMGVLCIFWIIKSLP) threads the bilayer. At 197 to 215 (SLPGEPSHQKQNTFRLLQR) the chain is on the cytoplasmic side. A helical membrane pass occupies residues 216–236 (PGVMAGMIAIFMSFAGQFAFF). Over 237-255 (TYIRPVYMNLAGFGVDGLT) the chain is Periplasmic. Residues 256-276 (LVLLSFGIASFVGTSLSSFIL) form a helical membrane-spanning segment. Topologically, residues 277–281 (KRSVK) are cytoplasmic. Residues 282-302 (LALAGAPFVLALSALVLTLWG) form a helical membrane-spanning segment. Residues 303 to 305 (SDK) are Periplasmic-facing. A helical transmembrane segment spans residues 306 to 326 (IVATGVAIIWGLTFALIPVGW). Topologically, residues 327–343 (STWITRSLADQAEKAGS) are cytoplasmic. Residues 344 to 364 (IQVAVIQLANTCGAAIGGYAL) form a helical membrane-spanning segment. Topologically, residues 365–366 (DN) are periplasmic. Residues 367-387 (IGLTSPLMLSGTLMLLTALLV) traverse the membrane as a helical segment. At 388-396 (TAKVKMKKS) the chain is on the cytoplasmic side.

The protein belongs to the major facilitator superfamily. DHA1 family. NepI (TC 2.A.1.2.26) subfamily.

It is found in the cell inner membrane. The catalysed reaction is inosine(in) + H(+)(out) = inosine(out) + H(+)(in). It carries out the reaction guanosine(in) + H(+)(out) = guanosine(out) + H(+)(in). Functionally, involved in the efflux of purine ribonucleosides, such as inosine and guanosine. This Escherichia coli O127:H6 (strain E2348/69 / EPEC) protein is Purine ribonucleoside efflux pump NepI.